Here is a 142-residue protein sequence, read N- to C-terminus: Hemoglobin subunit alpha-5 (142 aa).

The Globin domain occupies Thr-2–Arg-142. O2 is bound at residue His-59. Residue His-88 coordinates heme b.

Belongs to the globin family. As to quaternary structure, heterotetramer of two alpha chains and two beta chains. Red blood cells.

This is a larval (tadpole) alpha-globin. The polypeptide is Hemoglobin subunit alpha-5 (hba5) (Xenopus laevis (African clawed frog)).